Reading from the N-terminus, the 1367-residue chain is Paired amphipathic helix protein Sin3-like 2 (1367 aa).

Positions 14-44 (QFKRPLGSSRGESYEQSPITGGGSIGEGGIN) are disordered. The segment covering 33 to 42 (TGGGSIGEGG) has biased composition (gly residues). 2 consecutive PAH domains span residues 46–116 (QKLT…LPKG) and 130–200 (KTVE…LPDS). Positions 212–322 (SQAQRYDDRG…EAYSGPASHS (111 aa)) are disordered. Composition is skewed to basic and acidic residues over residues 230-286 (MFME…SRDL) and 299-311 (FSEKRKSSRRMEG). Residues 327–396 (LKSMYNQAFL…DEFNQFFERC (70 aa)) form the PAH 3 domain. Disordered stretches follow at residues 417–446 (EENLSRSVKGEEKDREHKRDVEAAKEKERS), 786–883 (DVHA…LSKP), 912–946 (QSDTSKANSNYDESGGPSKIEKEEGELSPVGDSED), and 958–1031 (ATAK…EGME). Basic and acidic residues-rich tracts occupy residues 424–446 (VKGEEKDREHKRDVEAAKEKERS) and 806–819 (SSGKENLKDGDLAN). Polar residues-rich tracts occupy residues 851-876 (ATSSSSFPSGVENNNGKVGSRDSSGS) and 912-923 (QSDTSKANSNYD). A compositionally biased stretch (basic and acidic residues) spans 958–967 (ATAKTEHSVE). 2 stretches are compositionally biased toward acidic residues: residues 968 to 989 (AEGENDEDADDEDGDDASEAGE) and 997 to 1016 (IGDECSQDDNGVEEEGEHDE). Serine 1023 carries the phosphoserine modification.

Its subcellular location is the nucleus. In terms of biological role, acts as a transcriptional repressor. Plays roles in regulating gene expression and genome stability. The polypeptide is Paired amphipathic helix protein Sin3-like 2 (SNL2) (Arabidopsis thaliana (Mouse-ear cress)).